We begin with the raw amino-acid sequence, 709 residues long: MGLNLLPIEMDDIRKRLDREPNEIEWRVIDAVWSEHCSYKSSKIFLKSFSIDSPNVIMGIKDWQDAGAVDIGDGWAIVIKVESHNHPSAIDPFNGAATGVGGIIRDIISKGAKPIALMDMIRVGNLKIRKNVWLLKNIIAGIAAYGNSIGVPVVGGELSFDDTYNDNPLVDVAAIGIVRKDKIKPSIVDKAGLKLVLAGLTGIDGLGGASFASRKLSGEDEIGAVQIADPFAGKIILDITLEIADKVEAIKDLGGGGLAVAVTEMANGLGAIVDIEKIPLRVKNMNPADVIISETQERMLYAVEEKNVEEVCKAFEEYEYPCSVIGEITSEPIIKFRYFGKDLVSLPTNALLEPPKFLWPIKNVRKNVEEKNVDLPLESTIYTVLSHPDLVSKEWVYSQFDYEVNTSTVVKPGDANGAVVSLPNGKLLAIKVDGNPDLCSEDAYECGKGIVAEAYRNLATVGARGMVAVDHLQFGDPKKPEVYYTFVEAIRGIGEATRFFNIPIVGGKVSFYNENSQGKPIKPTPLIVMAGLVQGKLLKNRVEDSSYVVLLGYTRKELGGSLLSKIFKVPSQAPKVRLQEDLLSSEVVIDAINEEKITFAKDISRGGLAASLFNIIVHGYGVEISTKSILSDTDNVVENLFSESSGRFVILTNEPEWIVEKSRSKGIVASIIGKVNKKTSILTIDNTDYDLKTIVNNYFNFLEEVIGNG.

H36 is a catalytic residue. ATP contacts are provided by Y39 and K80. E82 is a binding site for Mg(2+). Substrate is bound by residues 83-86 (SHNH) and R105. The active-site Proton acceptor is H84. Mg(2+) is bound at residue D106. Q226 serves as a coordination point for substrate. D252 provides a ligand contact to Mg(2+). Residue 294-296 (ETQ) participates in substrate binding. Residues D470 and G507 each contribute to the ATP site. S510 is a substrate binding site.

Belongs to the FGAMS family. Monomer. Part of the FGAM synthase complex composed of 1 PurL, 1 PurQ and 2 PurS subunits.

It localises to the cytoplasm. The catalysed reaction is N(2)-formyl-N(1)-(5-phospho-beta-D-ribosyl)glycinamide + L-glutamine + ATP + H2O = 2-formamido-N(1)-(5-O-phospho-beta-D-ribosyl)acetamidine + L-glutamate + ADP + phosphate + H(+). It participates in purine metabolism; IMP biosynthesis via de novo pathway; 5-amino-1-(5-phospho-D-ribosyl)imidazole from N(2)-formyl-N(1)-(5-phospho-D-ribosyl)glycinamide: step 1/2. Functionally, part of the phosphoribosylformylglycinamidine synthase complex involved in the purines biosynthetic pathway. Catalyzes the ATP-dependent conversion of formylglycinamide ribonucleotide (FGAR) and glutamine to yield formylglycinamidine ribonucleotide (FGAM) and glutamate. The FGAM synthase complex is composed of three subunits. PurQ produces an ammonia molecule by converting glutamine to glutamate. PurL transfers the ammonia molecule to FGAR to form FGAM in an ATP-dependent manner. PurS interacts with PurQ and PurL and is thought to assist in the transfer of the ammonia molecule from PurQ to PurL. The chain is Phosphoribosylformylglycinamidine synthase subunit PurL from Saccharolobus islandicus (strain M.16.27) (Sulfolobus islandicus).